The chain runs to 458 residues: DNA repair protein RadA (458 aa).

A C4-type zinc finger spans residues cysteine 11–cysteine 28. Glycine 100–serine 107 provides a ligand contact to ATP. The short motif at lysine 256–glycine 260 is the RadA KNRFG motif element. The lon-protease-like stretch occupies residues aspartate 355–leucine 458.

It belongs to the RecA family. RadA subfamily.

Functionally, DNA-dependent ATPase involved in processing of recombination intermediates, plays a role in repairing DNA breaks. Stimulates the branch migration of RecA-mediated strand transfer reactions, allowing the 3' invading strand to extend heteroduplex DNA faster. Binds ssDNA in the presence of ADP but not other nucleotides, has ATPase activity that is stimulated by ssDNA and various branched DNA structures, but inhibited by SSB. Does not have RecA's homology-searching function. This is DNA repair protein RadA from Haemophilus influenzae (strain ATCC 51907 / DSM 11121 / KW20 / Rd).